The following is a 967-amino-acid chain: Isoleucine--tRNA ligase 2 (967 aa).

Positions proline 58 to histidine 68 match the 'HIGH' region motif. Residues alanine 437–glycine 446 show a composition bias toward low complexity. A disordered region spans residues alanine 437–leucine 466. Glutamate 598 provides a ligand contact to L-isoleucyl-5'-AMP. The short motif at lysine 639–serine 643 is the 'KMSKS' region element. ATP is bound at residue lysine 642. Residues cysteine 922, cysteine 925, cysteine 942, and cysteine 945 each coordinate Zn(2+).

This sequence belongs to the class-I aminoacyl-tRNA synthetase family. IleS type 1 subfamily. In terms of assembly, monomer. The cofactor is Zn(2+).

Its subcellular location is the cytoplasm. It carries out the reaction tRNA(Ile) + L-isoleucine + ATP = L-isoleucyl-tRNA(Ile) + AMP + diphosphate. Its function is as follows. Catalyzes the attachment of isoleucine to tRNA(Ile). As IleRS can inadvertently accommodate and process structurally similar amino acids such as valine, to avoid such errors it has two additional distinct tRNA(Ile)-dependent editing activities. One activity is designated as 'pretransfer' editing and involves the hydrolysis of activated Val-AMP. The other activity is designated 'posttransfer' editing and involves deacylation of mischarged Val-tRNA(Ile). This chain is Isoleucine--tRNA ligase 2, found in Burkholderia mallei (strain ATCC 23344).